A 450-amino-acid polypeptide reads, in one-letter code: Involucrin (450 aa).

Over residues 1-19 (MSQQHTLPVTLPPTLSQEL) the composition is skewed to polar residues. 3 disordered regions span residues 1–43 (MSQQ…LPAP), 77–370 (QLQQ…EQLK), and 422–450 (PGQV…EPEV). Over residues 86 to 108 (QEVHLAKHQELQELQEQELHLGK) the composition is skewed to basic and acidic residues. Positions 120 to 135 (GKQQQQQESQEQELYL) are enriched in low complexity. Basic and acidic residues-rich tracts occupy residues 187-200 (LGKR…ELHL) and 264-281 (QELH…ELHL). The segment covering 295 to 344 (GEAAAAGVTGAGPAASKAARRATGAGTAPGKAAAAAGATGAGTAATAPAT) has biased composition (low complexity). Basic and acidic residues predominate over residues 345–370 (AEERQKAESLEQQLEQEKAQREEQLK).

It belongs to the involucrin family. As to quaternary structure, directly or indirectly cross-linked to cornifelin (CNFN). In terms of processing, substrate of transglutaminase. Specific glutamines or lysines are cross-linked to keratins, desmoplakin and to inter involucrin molecules. As to expression, keratinocytes of epidermis and other stratified squamous epithelia.

The protein resides in the cytoplasm. Its function is as follows. Part of the insoluble cornified cell envelope (CE) of stratified squamous epithelia. The sequence is that of Involucrin (IVL) from Lemur catta (Ring-tailed lemur).